A 540-amino-acid polypeptide reads, in one-letter code: Chaperonin GroEL 2/3 (540 aa).

ATP-binding positions include 30 to 33 (TLGP), K51, 87 to 91 (DGTTT), G415, 479 to 481 (NAA), and D495.

This sequence belongs to the chaperonin (HSP60) family. In terms of assembly, forms a cylinder of 14 subunits composed of two heptameric rings stacked back-to-back. Interacts with the co-chaperonin GroES.

It localises to the cytoplasm. It carries out the reaction ATP + H2O + a folded polypeptide = ADP + phosphate + an unfolded polypeptide.. Together with its co-chaperonin GroES, plays an essential role in assisting protein folding. The GroEL-GroES system forms a nano-cage that allows encapsulation of the non-native substrate proteins and provides a physical environment optimized to promote and accelerate protein folding. The polypeptide is Chaperonin GroEL 2/3 (Paraburkholderia xenovorans (strain LB400)).